Here is a 159-residue protein sequence, read N- to C-terminus: MDKPTTSAAAAAAQDSNLLPDSPQHGPTLSSASSFEALTRHDPNLSRLATKMFNKTEEYITHELNAPLEDYKLLEEMNKATIAKYKDMRQIAENLNTSTSELSLKFQQLAPMMQQIDEISDTVDKLEAAAYKLDAYSIALENRVKCVLQRKSGGGQVAQ.

The interval 1-37 (MDKPTTSAAAAAAQDSNLLPDSPQHGPTLSSASSFEA) is disordered. A compositionally biased stretch (polar residues) spans 14–36 (QDSNLLPDSPQHGPTLSSASSFE). Residues 69-134 (EDYKLLEEMN…KLEAAAYKLD (66 aa)) are a coiled coil.

It belongs to the BLOC1S2 family. Homodimer. Component of the biogenesis of lysosome-related organelles complex-1 (BLOC-1) composed of Blos1, Blos2, Blos3, Blos4, Dysb, Muted, Pldn and Snapin. Interacts with Snapin.

Functionally, component of the biogenesis of lysosome-related organelles complex-1 (BLOC-1) involved in pigment granule biogenesis. The sequence is that of Biogenesis of lysosome-related organelles complex 1 subunit 2 from Drosophila melanogaster (Fruit fly).